The following is a 420-amino-acid chain: Histidine--tRNA ligase (420 aa).

It belongs to the class-II aminoacyl-tRNA synthetase family. As to quaternary structure, homodimer.

It is found in the cytoplasm. It catalyses the reaction tRNA(His) + L-histidine + ATP = L-histidyl-tRNA(His) + AMP + diphosphate + H(+). The protein is Histidine--tRNA ligase of Acholeplasma laidlawii (strain PG-8A).